A 252-amino-acid chain; its full sequence is tRNA (guanine-N(1)-)-methyltransferase (252 aa).

S-adenosyl-L-methionine contacts are provided by residues Gly-110 and 130–135 (VGDFVL).

It belongs to the RNA methyltransferase TrmD family. In terms of assembly, homodimer.

It localises to the cytoplasm. It catalyses the reaction guanosine(37) in tRNA + S-adenosyl-L-methionine = N(1)-methylguanosine(37) in tRNA + S-adenosyl-L-homocysteine + H(+). Specifically methylates guanosine-37 in various tRNAs. The protein is tRNA (guanine-N(1)-)-methyltransferase of Magnetococcus marinus (strain ATCC BAA-1437 / JCM 17883 / MC-1).